The chain runs to 213 residues: RNA chaperone ProQ (213 aa).

Residues 105–150 (ESQEKAKAKRAAQTPKAAPAGKAPAKKAPKKVAVPARKTERPAKAA) are disordered. The segment covering 115–127 (AAQTPKAAPAGKA) has biased composition (low complexity).

Belongs to the ProQ family.

The protein localises to the cytoplasm. RNA chaperone with significant RNA binding, RNA strand exchange and RNA duplexing activities. The polypeptide is RNA chaperone ProQ (Shewanella oneidensis (strain ATCC 700550 / JCM 31522 / CIP 106686 / LMG 19005 / NCIMB 14063 / MR-1)).